We begin with the raw amino-acid sequence, 467 residues long: UPF0236 protein TTE0610/TTE0881/TTE1053/TTE2432 (467 aa).

Belongs to the UPF0236 family.

This Caldanaerobacter subterraneus subsp. tengcongensis (strain DSM 15242 / JCM 11007 / NBRC 100824 / MB4) (Thermoanaerobacter tengcongensis) protein is UPF0236 protein TTE0610/TTE0881/TTE1053/TTE2432.